Reading from the N-terminus, the 91-residue chain is MTEAKNPRSLVGTVVSNLMDKSIVVNVERRIQHPLYKKYIRRSKKFHAHDAENICHIGDIVKIEECRPLSKTKSWRLVSVLAEGVIEGDNA.

Belongs to the universal ribosomal protein uS17 family. In terms of assembly, part of the 30S ribosomal subunit.

Its function is as follows. One of the primary rRNA binding proteins, it binds specifically to the 5'-end of 16S ribosomal RNA. This Acidithiobacillus ferrooxidans (strain ATCC 23270 / DSM 14882 / CIP 104768 / NCIMB 8455) (Ferrobacillus ferrooxidans (strain ATCC 23270)) protein is Small ribosomal subunit protein uS17.